An 88-amino-acid polypeptide reads, in one-letter code: Large ribosomal subunit protein bL27 (88 aa).

The disordered stretch occupies residues 1–21 (MAHKKAGGSSRNGRDSDGRRL).

This sequence belongs to the bacterial ribosomal protein bL27 family.

This is Large ribosomal subunit protein bL27 from Methylobacterium nodulans (strain LMG 21967 / CNCM I-2342 / ORS 2060).